A 258-amino-acid polypeptide reads, in one-letter code: Malonyl-[acyl-carrier protein] O-methyltransferase (258 aa).

This sequence belongs to the methyltransferase superfamily.

The catalysed reaction is malonyl-[ACP] + S-adenosyl-L-methionine = malonyl-[ACP] methyl ester + S-adenosyl-L-homocysteine. The protein operates within cofactor biosynthesis; biotin biosynthesis. Functionally, converts the free carboxyl group of a malonyl-thioester to its methyl ester by transfer of a methyl group from S-adenosyl-L-methionine (SAM). It allows to synthesize pimeloyl-ACP via the fatty acid synthetic pathway. The sequence is that of Malonyl-[acyl-carrier protein] O-methyltransferase from Hamiltonella defensa subsp. Acyrthosiphon pisum (strain 5AT).